The sequence spans 67 residues: DNA-directed RNA polymerase subunit omega (67 aa).

This sequence belongs to the RNA polymerase subunit omega family. The RNAP catalytic core consists of 2 alpha, 1 beta, 1 beta' and 1 omega subunit. When a sigma factor is associated with the core the holoenzyme is formed, which can initiate transcription.

The enzyme catalyses RNA(n) + a ribonucleoside 5'-triphosphate = RNA(n+1) + diphosphate. Its function is as follows. Promotes RNA polymerase assembly. Latches the N- and C-terminal regions of the beta' subunit thereby facilitating its interaction with the beta and alpha subunits. The chain is DNA-directed RNA polymerase subunit omega from Listeria monocytogenes serotype 4a (strain HCC23).